A 143-amino-acid chain; its full sequence is Transcriptional regulator MraZ (143 aa).

SpoVT-AbrB domains are found at residues 5–47 (TYTP…PRAE) and 76–119 (TDEQ…DAAA).

Belongs to the MraZ family. As to quaternary structure, forms oligomers.

It localises to the cytoplasm. The protein resides in the nucleoid. The protein is Transcriptional regulator MraZ of Mycobacterium sp. (strain JLS).